Consider the following 70-residue polypeptide: Protein SlyX homolog (70 aa).

It belongs to the SlyX family.

This Nitrobacter winogradskyi (strain ATCC 25391 / DSM 10237 / CIP 104748 / NCIMB 11846 / Nb-255) protein is Protein SlyX homolog.